A 538-amino-acid polypeptide reads, in one-letter code: Eukaryotic translation initiation factor 3 subunit L (538 aa).

The PCI domain occupies 305–513 (TFSDILLYIQ…IHIADTKVSH (209 aa)).

Belongs to the eIF-3 subunit L family. In terms of assembly, component of the eukaryotic translation initiation factor 3 (eIF-3) complex. The eIF-3 complex interacts with pix.

It localises to the cytoplasm. Functionally, component of the eukaryotic translation initiation factor 3 (eIF-3) complex, which is involved in protein synthesis of a specialized repertoire of mRNAs and, together with other initiation factors, stimulates binding of mRNA and methionyl-tRNAi to the 40S ribosome. The eIF-3 complex specifically targets and initiates translation of a subset of mRNAs involved in cell proliferation. In Drosophila virilis (Fruit fly), this protein is Eukaryotic translation initiation factor 3 subunit L.